A 1040-amino-acid chain; its full sequence is Nucleotide-binding oligomerization domain-containing protein 2 (1040 aa).

2 consecutive CARD domains span residues 26–122 (CEMC…LHGC) and 126–218 (HSLH…EAAT). Positions 63–77 (WEVLSWEDYEGFHLL) match the ATG16L1-binding motif motif. ADP is bound by residues threonine 239, tyrosine 252, threonine 253, glycine 302, serine 303, glycine 304, lysine 305, serine 306, and threonine 307. Positions 241 to 274 (DGAETLCLEDIYTENVLEVWADVGMAGPPQKSPA) are required for CARD9 binding. The region spanning 293–618 (DTVLVVGEAG…FFAAFYLALS (326 aa)) is the NACHT domain. Residue 299 to 306 (GEAGSGKS) participates in ATP binding. Cysteine 395 is lipidated: S-palmitoyl cysteine. Histidine 603 serves as a coordination point for ADP. 9 LRR repeats span residues 791-812 (RPVA…QLLP), 816-839 (VCKA…IECA), 844-865 (QLQK…SMAK), 872-884 (NFLA…NYIT), 900-920 (SLQF…QALA), 928-949 (SLRW…ALAL), 956-976 (MLEE…CSLA), 984-1005 (SLKI…ALLQ), and 1012-1032 (TILE…DKLG). The S-palmitoyl cysteine moiety is linked to residue cysteine 1033.

Belongs to the NOD1-NOD2 family. As to quaternary structure, homooligomer: homooligomerizes following muramyl dipeptide (MDP)-binding, promoting RIPK2 recruitment. Interacts (via CARD domain) with RIPK2 (via CARD domain). Following RIPK2 recruitment, RIPK2 homooligomerizes via its CARD domain and forms long filaments named RIPosomes. Interacts (via CARD domain) with ubiquitin; inhibiting interaction with RIPK2. Component of a signaling complex consisting of ARHGEF2, NOD2 and RIPK2. Interacts with ANKRD17 (via N-terminus). Interacts with HSPA1A; the interaction enhances NOD2 stability. Interacts (via both CARD domains) with HSP90; the interaction enhances NOD2 stability. Interacts (via CARD domain) with SOCS3; the interaction promotes NOD2 degradation. Interacts (via CARD domain) with ERBIN; the interaction inhibits activation of NOD2. Interacts with MAPKBP1; the interaction is enhanced in the presence of muramyl dipeptide (MDP) and inhibits NOD2 homooligomerization and activation. Interacts with INAVA; the interaction takes place upon Pattern recognition receptor (PRR) stimulation. Interacts (via NACHT domain) with CARD9. Interacts (via CARD domain) with CASP1; this interaction leads to IL1B processing. Also interacts with CASP4. Interacts with NLRP1; this interaction is enhanced in the presence of muramyl dipeptide (MDP) and leads to increased IL1B release. Interacts with NLRP12; this interaction promotes degradation of NOD2 through the ubiquitin-proteasome pathway. Interacts with ANKHD1, C10orf67, CHMP5, DOCK7, ENTR1, KRT15, LDOC1, PPP1R12C, PPP2R3B, TRIM41 and VIM. Interacts with MAVS; interaction takes place following single-stranded RNA (ssRNA)-binding. Interacts with ATG16L1. Interacts with IRGM; promoting IRGM 'Lys-63'-linked polyubiquitination, which is required for interactions with the core autophagy factors. Post-translationally, palmitoylated by ZDHHC5; palmitoylation is required for proper recruitment to the bacterial entry site and hence for proper signaling upon cognate peptidoglycan detection. Palmitoylation promotes localization to the cell membrane. Palmitoylation protects from SQSTM1/p62-dependent autophagic degradation. In terms of processing, polyubiquitinated by TRIM27, leading to proteasome-mediated degradation. Polyubiquitinated and degraded following muramyl dipeptide (MDP) stimulation, conferring MDP tolerance and preventing septic shock. Degraded via selective autophagy following interaction with IRGM. IRGM promotes NOD2-RIPK2 RIPosome recruitment to autophagosome membranes, promoting their SQSTM1/p62-dependent autophagic degradation. Post-translationally, O-glycosylated by OGT, O-GlcNAcylation increases protein stability. As to expression, expressed in monocytes, macrophages, dendritic cells, hepatocytes, preadipocytes, epithelial cells of oral cavity, lung and intestine, with higher expression in ileal Paneth cells and in intestinal stem cells. Expressed at higher level in leukocytes.

It is found in the cell membrane. The protein resides in the basolateral cell membrane. Its subcellular location is the cytoplasm. The protein localises to the mitochondrion. With respect to regulation, ADP-binding promotes an inactive closed conformation. Pattern recognition receptor (PRR) that detects bacterial peptidoglycan fragments and other danger signals and plays an important role in gastrointestinal immunity. Specifically activated by muramyl dipeptide (MDP), a fragment of bacterial peptidoglycan found in every bacterial peptidoglycan type. NOD2 specifically recognizes and binds 6-O-phospho-MDP, the phosphorylated form of MDP, which is generated by NAGK. 6-O-phospho-MDP-binding triggers oligomerization that facilitates the binding and subsequent activation of the proximal adapter receptor-interacting RIPK2. Following recruitment, RIPK2 undergoes 'Met-1'- (linear) and 'Lys-63'-linked polyubiquitination by E3 ubiquitin-protein ligases XIAP, BIRC2, BIRC3 and the LUBAC complex, becoming a scaffolding protein for downstream effectors, triggering activation of the NF-kappa-B and MAP kinases signaling. This in turn leads to the transcriptional activation of hundreds of genes involved in immune response. Its ability to detect bacterial MDP plays a central role in maintaining the equilibrium between intestinal microbiota and host immune responses to control inflammation. An imbalance in this relationship results in dysbiosis, whereby pathogenic bacteria prevail on commensals, causing damage in the intestinal epithelial barrier as well as allowing bacterial invasion and inflammation. Acts as a regulator of appetite by sensing MDP in a subset of brain neurons: microbiota-derived MDP reach the brain, where they bind and activate NOD2 in inhibitory hypothalamic neurons, decreasing neuronal activity, thereby regulating satiety and body temperature. NOD2-dependent MDP-sensing of bacterial cell walls in the intestinal epithelial compartment contributes to sustained postnatal growth upon undernutrition. Also plays a role in antiviral response by acting as a sensor of single-stranded RNA (ssRNA) from viruses: upon ssRNA-binding, interacts with MAVS, leading to activation of interferon regulatory factor-3/IRF3 and expression of type I interferon. Also acts as a regulator of autophagy in dendritic cells via its interaction with ATG16L1, possibly by recruiting ATG16L1 at the site of bacterial entry. NOD2 activation in the small intestine crypt also contributes to intestinal stem cells survival and function: acts by promoting mitophagy via its association with ATG16L1. In addition to its main role in innate immunity, also regulates the adaptive immune system by acting as regulator of helper T-cell and regulatory T-cells (Tregs). Besides recognizing pathogens, also involved in the endoplasmic reticulum stress response: acts by sensing and binding to the cytosolic metabolite sphingosine-1-phosphate generated in response to endoplasmic reticulum stress, initiating an inflammation process that leads to activation of the NF-kappa-B and MAP kinases signaling. May also be involved in NLRP1 activation following activation by MDP, leading to CASP1 activation and IL1B release in macrophages. Functionally, acts as a pattern recognition receptor (PRR); able to activate NF-kappa-B. In terms of biological role, can activate NF-kappa-B in a muramyl dipeptide (MDP)-independent manner. The chain is Nucleotide-binding oligomerization domain-containing protein 2 from Homo sapiens (Human).